The primary structure comprises 122 residues: Small ribosomal subunit protein uS13 (122 aa).

Positions 95–122 (GLPVRGQRTHTNARTRKGPAKPIAGKKK) are disordered.

The protein belongs to the universal ribosomal protein uS13 family. In terms of assembly, part of the 30S ribosomal subunit. Forms a loose heterodimer with protein S19. Forms two bridges to the 50S subunit in the 70S ribosome.

Functionally, located at the top of the head of the 30S subunit, it contacts several helices of the 16S rRNA. In the 70S ribosome it contacts the 23S rRNA (bridge B1a) and protein L5 of the 50S subunit (bridge B1b), connecting the 2 subunits; these bridges are implicated in subunit movement. Contacts the tRNAs in the A and P-sites. This chain is Small ribosomal subunit protein uS13, found in Caulobacter vibrioides (strain ATCC 19089 / CIP 103742 / CB 15) (Caulobacter crescentus).